The sequence spans 98 residues: Integration host factor subunit alpha (98 aa).

Residues 53–69 (DLREKSERPGRNPKTGE) are compositionally biased toward basic and acidic residues. The tract at residues 53-73 (DLREKSERPGRNPKTGEDIPI) is disordered.

The protein belongs to the bacterial histone-like protein family. As to quaternary structure, heterodimer of an alpha and a beta chain.

This protein is one of the two subunits of integration host factor, a specific DNA-binding protein that functions in genetic recombination as well as in transcriptional and translational control. The protein is Integration host factor subunit alpha of Aliivibrio salmonicida (strain LFI1238) (Vibrio salmonicida (strain LFI1238)).